A 798-amino-acid polypeptide reads, in one-letter code: Tripartite terminase subunit 1 (798 aa).

A C3H1-type zinc finger spans residues 191-219 (CFQCYEELMAVPNQGRSINRRMQGLLCDH). Residues 416–429 (AAGAARSRAEAASG) are compositionally biased toward low complexity. The tract at residues 416–458 (AAGAARSRAEAASGAGAGGEEGAGAAAGRGNTGGDEGAGTTTA) is disordered. The segment covering 430 to 452 (AGAGGEEGAGAAAGRGNTGGDEG) has biased composition (gly residues). Position 674 to 681 (674 to 681 (YNETFGKQ)) interacts with ATP.

Belongs to the herpesviridae TRM1 protein family. In terms of assembly, associates with TRM2 and TRM3 to form the tripartite terminase complex. Interacts with portal protein.

It localises to the host nucleus. Functionally, component of the molecular motor that translocates viral genomic DNA in empty capsid during DNA packaging. Forms a tripartite terminase complex together with TRM2 and TRM3 in the host cytoplasm. Once the complex reaches the host nucleus, it interacts with the capsid portal vertex. This portal forms a ring in which genomic DNA is translocated into the capsid. TRM1 carries an endonuclease activity that plays an important role for the cleavage of concatemeric viral DNA into unit length genomes. In Murid herpesvirus 1 (strain Smith) (MuHV-1), this protein is Tripartite terminase subunit 1.